A 286-amino-acid chain; its full sequence is Protein HEAT-STRESS-ASSOCIATED 32 (286 aa).

Belongs to the phosphosulfolactate synthase family.

In terms of biological role, transactivator required, together with HSP101, for long-term acquired thermotolerance (LAT) maintenance, probably by regulating heat-inducible genes expression, thus being a cellular component of thermomemory. This chain is Protein HEAT-STRESS-ASSOCIATED 32, found in Arabidopsis thaliana (Mouse-ear cress).